The following is a 475-amino-acid chain: Ribulose bisphosphate carboxylase large chain (475 aa).

The propeptide occupies 1 to 2 (MS). At proline 3 the chain carries N-acetylproline. An N6,N6,N6-trimethyllysine modification is found at lysine 14. Asparagine 123 and threonine 173 together coordinate substrate. Residue lysine 175 is the Proton acceptor of the active site. Lysine 177 contributes to the substrate binding site. The Mg(2+) site is built by lysine 201, aspartate 203, and glutamate 204. N6-carboxylysine is present on lysine 201. Catalysis depends on histidine 294, which acts as the Proton acceptor. Substrate-binding residues include arginine 295, histidine 327, and serine 379.

Belongs to the RuBisCO large chain family. Type I subfamily. In terms of assembly, heterohexadecamer of 8 large chains and 8 small chains; disulfide-linked. The disulfide link is formed within the large subunit homodimers. It depends on Mg(2+) as a cofactor. In terms of processing, the disulfide bond which can form in the large chain dimeric partners within the hexadecamer appears to be associated with oxidative stress and protein turnover.

The protein localises to the plastid. It localises to the chloroplast. The enzyme catalyses 2 (2R)-3-phosphoglycerate + 2 H(+) = D-ribulose 1,5-bisphosphate + CO2 + H2O. It carries out the reaction D-ribulose 1,5-bisphosphate + O2 = 2-phosphoglycolate + (2R)-3-phosphoglycerate + 2 H(+). Functionally, ruBisCO catalyzes two reactions: the carboxylation of D-ribulose 1,5-bisphosphate, the primary event in carbon dioxide fixation, as well as the oxidative fragmentation of the pentose substrate in the photorespiration process. Both reactions occur simultaneously and in competition at the same active site. In Staurastrum punctulatum (Green alga), this protein is Ribulose bisphosphate carboxylase large chain.